Consider the following 201-residue polypeptide: 7-methyl-GTP pyrophosphatase (201 aa).

The Proton acceptor role is filled by Asp73.

The protein belongs to the Maf family. YceF subfamily. A divalent metal cation serves as cofactor.

It localises to the cytoplasm. It catalyses the reaction N(7)-methyl-GTP + H2O = N(7)-methyl-GMP + diphosphate + H(+). Nucleoside triphosphate pyrophosphatase that hydrolyzes 7-methyl-GTP (m(7)GTP). May have a dual role in cell division arrest and in preventing the incorporation of modified nucleotides into cellular nucleic acids. This is 7-methyl-GTP pyrophosphatase from Thiobacillus denitrificans (strain ATCC 25259 / T1).